A 138-amino-acid polypeptide reads, in one-letter code: Nucleoside diphosphate kinase (138 aa).

ATP is bound by residues K9, F57, R85, T91, R102, and N112. H115 (pros-phosphohistidine intermediate) is an active-site residue.

Belongs to the NDK family. It depends on Mg(2+) as a cofactor.

The protein resides in the cytoplasm. It catalyses the reaction a 2'-deoxyribonucleoside 5'-diphosphate + ATP = a 2'-deoxyribonucleoside 5'-triphosphate + ADP. It carries out the reaction a ribonucleoside 5'-diphosphate + ATP = a ribonucleoside 5'-triphosphate + ADP. Its function is as follows. Major role in the synthesis of nucleoside triphosphates other than ATP. The ATP gamma phosphate is transferred to the NDP beta phosphate via a ping-pong mechanism, using a phosphorylated active-site intermediate. The protein is Nucleoside diphosphate kinase of Picrophilus torridus (strain ATCC 700027 / DSM 9790 / JCM 10055 / NBRC 100828 / KAW 2/3).